A 297-amino-acid polypeptide reads, in one-letter code: 4-hydroxy-tetrahydrodipicolinate synthase (297 aa).

Thr47 provides a ligand contact to pyruvate. The active-site Proton donor/acceptor is the Tyr135. Catalysis depends on Lys163, which acts as the Schiff-base intermediate with substrate. A pyruvate-binding site is contributed by Ile205.

This sequence belongs to the DapA family. In terms of assembly, homotetramer; dimer of dimers.

The protein localises to the cytoplasm. The enzyme catalyses L-aspartate 4-semialdehyde + pyruvate = (2S,4S)-4-hydroxy-2,3,4,5-tetrahydrodipicolinate + H2O + H(+). The protein operates within amino-acid biosynthesis; L-lysine biosynthesis via DAP pathway; (S)-tetrahydrodipicolinate from L-aspartate: step 3/4. Functionally, catalyzes the condensation of (S)-aspartate-beta-semialdehyde [(S)-ASA] and pyruvate to 4-hydroxy-tetrahydrodipicolinate (HTPA). In Cytophaga hutchinsonii (strain ATCC 33406 / DSM 1761 / CIP 103989 / NBRC 15051 / NCIMB 9469 / D465), this protein is 4-hydroxy-tetrahydrodipicolinate synthase.